We begin with the raw amino-acid sequence, 244 residues long: MAMTGRARSMGFSILQKALSSAQRSNAHRSILCPTLSNSELLRNYATASASKEQKIKVPLTMYGVSGNYASALYLAAVKSNTLEKVESELYDLVEASKKSPTFSQFMRDPSVPVDTRVNAIKEICAQAKFGDTTQNFLLILAENGRLKHIDRIVKRFKELTMAHRGEVKATVTTVIPLPADEEKELKATLQEMVGQGKSVQIEQKIDPTILGGLVVEFGQKVFDMSIRTRARQMERFLREPLNF.

The transit peptide at 1–45 directs the protein to the mitochondrion; the sequence is MAMTGRARSMGFSILQKALSSAQRSNAHRSILCPTLSNSELLRNY.

It belongs to the ATPase delta chain family. As to quaternary structure, F-type ATPases have 2 components, CF(1) - the catalytic core - and CF(0) - the membrane proton channel. CF(1) has five subunits: alpha(3), beta(3), gamma(1), delta(1), epsilon(1). CF(0) has three main subunits: a, b and c.

The protein localises to the mitochondrion. Its subcellular location is the mitochondrion inner membrane. In terms of biological role, mitochondrial membrane ATP synthase (F(1)F(0) ATP synthase or Complex V) produces ATP from ADP in the presence of a proton gradient across the membrane which is generated by electron transport complexes of the respiratory chain. F-type ATPases consist of two structural domains, F(1) - containing the extramembraneous catalytic core and F(0) - containing the membrane proton channel, linked together by a central stalk and a peripheral stalk. During catalysis, ATP synthesis in the catalytic domain of F(1) is coupled via a rotary mechanism of the central stalk subunits to proton translocation. Part of the complex F(0) domain and the peripheric stalk, which acts as a stator to hold the catalytic alpha(3)beta(3) subcomplex and subunit a/ATP6 static relative to the rotary elements. This is ATP synthase subunit O, mitochondrial from Ipomoea batatas (Sweet potato).